The chain runs to 361 residues: Chalcone synthase A (361 aa).

Cys-168 is an active-site residue.

It belongs to the thiolase-like superfamily. Chalcone/stilbene synthases family.

The catalysed reaction is (E)-4-coumaroyl-CoA + 3 malonyl-CoA + 3 H(+) = 2',4,4',6'-tetrahydroxychalcone + 3 CO2 + 4 CoA. The protein operates within secondary metabolite biosynthesis; flavonoid biosynthesis. The primary product of this enzyme is 4,2',4',6'-tetrahydroxychalcone (also termed naringenin-chalcone or chalcone) which can under specific conditions spontaneously isomerize into naringenin. This is Chalcone synthase A (CHSA) from Ipomoea cordatotriloba (Tievine).